The sequence spans 259 residues: Leucine-rich repeat-containing protein 61 (259 aa).

LRR repeat units lie at residues serine 32–leucine 53, glycine 54–arginine 75, glutamine 76–glutamate 97, and asparagine 98–alanine 119. Residues asparagine 138 to aspartate 178 form the LRRCT domain.

The chain is Leucine-rich repeat-containing protein 61 (LRRC61) from Homo sapiens (Human).